The sequence spans 359 residues: Malonyl-CoA reductase (359 aa).

16-19 is an NADP(+) binding site; it reads TGLV. Catalysis depends on cysteine 153, which acts as the Acyl-thioester intermediate. An NADP(+)-binding site is contributed by 183–184; that stretch reads SG. Histidine 248 (proton acceptor) is an active-site residue. 335-336 provides a ligand contact to NADP(+); it reads NT.

This sequence belongs to the aspartate-semialdehyde dehydrogenase family. In terms of assembly, homodimer and possibly a tetramer. The cofactor is Mg(2+). Mn(2+) is required as a cofactor.

The catalysed reaction is 3-oxopropanoate + NADP(+) + CoA = malonyl-CoA + NADPH + H(+). Its activity is regulated as follows. Activated by dithioerythritol (5 mM) and inhibited by the thiol-blocking agent iodoacetamide (0.1 mM). Functionally, catalyzes the reduction of malonyl-CoA to malonate semialdehyde, a key step in the 3-hydroxypropanoate and the 3-hydroxypropanoate/4-hydroxybutyrate cycles. Can also use succinyl-CoA and succinate semialdehyde as substrates but at a lower rate than malonyl-CoA. The chain is Malonyl-CoA reductase (mcr) from Sulfurisphaera tokodaii (strain DSM 16993 / JCM 10545 / NBRC 100140 / 7) (Sulfolobus tokodaii).